We begin with the raw amino-acid sequence, 198 residues long: Proteasome subunit beta 2 (198 aa).

Residues 1–4 (MVLA) constitute a propeptide, removed in mature form; by autocatalysis. The Nucleophile role is filled by T5.

It belongs to the peptidase T1B family. The 20S proteasome core is composed of 14 alpha and 14 beta subunits that assemble into four stacked heptameric rings, resulting in a barrel-shaped structure. The two inner rings, each composed of seven catalytic beta subunits, are sandwiched by two outer rings, each composed of seven alpha subunits. The catalytic chamber with the active sites is on the inside of the barrel. Has a gated structure, the ends of the cylinder being occluded by the N-termini of the alpha-subunits. Is capped at one or both ends by the proteasome regulatory ATPase, PAN.

The protein localises to the cytoplasm. It catalyses the reaction Cleavage of peptide bonds with very broad specificity.. Its activity is regulated as follows. The formation of the proteasomal ATPase PAN-20S proteasome complex, via the docking of the C-termini of PAN into the intersubunit pockets in the alpha-rings, triggers opening of the gate for substrate entry. Interconversion between the open-gate and close-gate conformations leads to a dynamic regulation of the 20S proteasome proteolysis activity. Functionally, component of the proteasome core, a large protease complex with broad specificity involved in protein degradation. The sequence is that of Proteasome subunit beta 2 from Korarchaeum cryptofilum (strain OPF8).